A 179-amino-acid chain; its full sequence is Large ribosomal subunit protein uL6 (179 aa).

It belongs to the universal ribosomal protein uL6 family. Part of the 50S ribosomal subunit.

This protein binds to the 23S rRNA, and is important in its secondary structure. It is located near the subunit interface in the base of the L7/L12 stalk, and near the tRNA binding site of the peptidyltransferase center. In Leptospira interrogans serogroup Icterohaemorrhagiae serovar copenhageni (strain Fiocruz L1-130), this protein is Large ribosomal subunit protein uL6.